Consider the following 174-residue polypeptide: 3-hydroxydecanoyl-[acyl-carrier-protein] dehydratase (174 aa).

The active site involves histidine 73.

Belongs to the thioester dehydratase family. FabA subfamily. In terms of assembly, homodimer.

The protein localises to the cytoplasm. The enzyme catalyses a (3R)-hydroxyacyl-[ACP] = a (2E)-enoyl-[ACP] + H2O. It catalyses the reaction (3R)-hydroxydecanoyl-[ACP] = (2E)-decenoyl-[ACP] + H2O. It carries out the reaction (2E)-decenoyl-[ACP] = (3Z)-decenoyl-[ACP]. The protein operates within lipid metabolism; fatty acid biosynthesis. Necessary for the introduction of cis unsaturation into fatty acids. Catalyzes the dehydration of (3R)-3-hydroxydecanoyl-ACP to E-(2)-decenoyl-ACP and then its isomerization to Z-(3)-decenoyl-ACP. Can catalyze the dehydratase reaction for beta-hydroxyacyl-ACPs with saturated chain lengths up to 16:0, being most active on intermediate chain length. The sequence is that of 3-hydroxydecanoyl-[acyl-carrier-protein] dehydratase from Teredinibacter turnerae (strain ATCC 39867 / T7901).